We begin with the raw amino-acid sequence, 257 residues long: Imidazole glycerol phosphate synthase subunit HisF (257 aa).

Catalysis depends on residues D12 and D131.

It belongs to the HisA/HisF family. Heterodimer of HisH and HisF.

Its subcellular location is the cytoplasm. The enzyme catalyses 5-[(5-phospho-1-deoxy-D-ribulos-1-ylimino)methylamino]-1-(5-phospho-beta-D-ribosyl)imidazole-4-carboxamide + L-glutamine = D-erythro-1-(imidazol-4-yl)glycerol 3-phosphate + 5-amino-1-(5-phospho-beta-D-ribosyl)imidazole-4-carboxamide + L-glutamate + H(+). The protein operates within amino-acid biosynthesis; L-histidine biosynthesis; L-histidine from 5-phospho-alpha-D-ribose 1-diphosphate: step 5/9. IGPS catalyzes the conversion of PRFAR and glutamine to IGP, AICAR and glutamate. The HisF subunit catalyzes the cyclization activity that produces IGP and AICAR from PRFAR using the ammonia provided by the HisH subunit. The protein is Imidazole glycerol phosphate synthase subunit HisF of Paraburkholderia xenovorans (strain LB400).